The chain runs to 487 residues: NGFI-A-binding protein 1 (487 aa).

An NCD1 region spans residues 4 to 82; that stretch reads ALPRTLGELQ…RDWVTNPGLF (79 aa). Residues lysine 126, lysine 129, and lysine 143 each participate in a glycyl lysine isopeptide (Lys-Gly) (interchain with G-Cter in SUMO2) cross-link. The segment at 162-188 is disordered; it reads QGHHATESEHSLSPADLGSPASPKESS. Phosphoserine occurs at positions 172 and 183. Lysine 212 is covalently cross-linked (Glycyl lysine isopeptide (Lys-Gly) (interchain with G-Cter in SUMO2)). The tract at residues 221-310 is NCD2; that stretch reads LLKTNKKLAK…ARQISREVTY (90 aa). The necessary for nuclear localization stretch occupies residues 307–338; sequence EVTYKYTYRTTKSKCGERDELSPKRIKVEDGF. Serine 328 bears the Phosphoserine mark. Residue lysine 333 forms a Glycyl lysine isopeptide (Lys-Gly) (interchain with G-Cter in SUMO1); alternate linkage. Lysine 333 is covalently cross-linked (Glycyl lysine isopeptide (Lys-Gly) (interchain with G-Cter in SUMO2); alternate). Glycyl lysine isopeptide (Lys-Gly) (interchain with G-Cter in SUMO2) cross-links involve residues lysine 355, lysine 369, and lysine 373. Residues 399–434 form a disordered region; that stretch reads YRQSSEEHSPNGLTSDNSDGQGERPLNLRMPNLQNR. Serine 407 is subject to Phosphoserine. Over residues 409–418 the composition is skewed to polar residues; it reads NGLTSDNSDG. Glycyl lysine isopeptide (Lys-Gly) (interchain with G-Cter in SUMO2) cross-links involve residues lysine 454, lysine 465, and lysine 477. Lysine 480 participates in a covalent cross-link: Glycyl lysine isopeptide (Lys-Gly) (interchain with G-Cter in SUMO1); alternate. A Glycyl lysine isopeptide (Lys-Gly) (interchain with G-Cter in SUMO2); alternate cross-link involves residue lysine 480.

The protein belongs to the NAB family. As to quaternary structure, homomultimers may associate with EGR1 bound to DNA. As to expression, isoform Short is found in myeloid leukemia cell line KG-1.

It is found in the nucleus. Functionally, acts as a transcriptional repressor for zinc finger transcription factors EGR1 and EGR2. This chain is NGFI-A-binding protein 1 (NAB1), found in Homo sapiens (Human).